The chain runs to 388 residues: Na(+)/H(+) antiporter NhaA (388 aa).

The Cytoplasmic segment spans residues 1 to 11; that stretch reads MKHLHRFFSSD. Residues 12-31 form a helical membrane-spanning segment; it reads ASGGIILIIAAILAMMMANS. Over 32–58 the chain is Periplasmic; the sequence is GATSGWYHDFLETPVQLRVGSLEINKN. The helical transmembrane segment at 59 to 80 threads the bilayer; that stretch reads MLLWINDALMAVFFLLVGLEVK. Residues 81–96 lie on the Cytoplasmic side of the membrane; that stretch reads RELMQGSLASLRQAAF. A helical transmembrane segment spans residues 97-116; sequence PVIAAIGGMIVPALLYLAFN. At 117–122 the chain is on the periplasmic side; sequence YADPIT. Residues 123 to 130 form a helical membrane-spanning segment; that stretch reads REGWAIPA. At 131-154 the chain is on the cytoplasmic side; the sequence is ATDIAFALGVLALLGSRVPLALKI. Residues 155-176 form a helical membrane-spanning segment; that stretch reads FLMALAIIDDLGAIIIIALFYT. Residues 177-180 lie on the Periplasmic side of the membrane; it reads NDLS. A helical transmembrane segment spans residues 181–200; sequence MASLGVAAVAIAVLAVLNLC. The Cytoplasmic segment spans residues 201 to 204; the sequence is GVRR. The helical transmembrane segment at 205-222 threads the bilayer; the sequence is TGVYILVGVVLWTAVLKS. G223 is a topological domain (periplasmic). Residues 224-236 form a helical membrane-spanning segment; that stretch reads VHATLAGVIVGFF. Over 237-253 the chain is Cytoplasmic; the sequence is IPLKEKHGRSTAKRLEH. A helical transmembrane segment spans residues 254–272; the sequence is VLHPWVAYLILPLFAFANA. The Periplasmic segment spans residues 273–286; that stretch reads GVSLQGVTLDGLTS. Residues 287-310 traverse the membrane as a helical segment; it reads ILPLGIIAGLLIGKPLGISLFCWL. The Cytoplasmic portion of the chain corresponds to 311 to 339; sequence ALRLKLAHLPEGTTYQQIMAVGILCGIGF. Residues 340 to 350 form a helical membrane-spanning segment; sequence TMSIFIASLAF. The Periplasmic segment spans residues 351–357; sequence GSVDPEL. A helical membrane pass occupies residues 358–380; it reads INWAKLGILVGSISSAVIGYSWL. Residues 381–388 lie on the Cytoplasmic side of the membrane; that stretch reads RVRLRPSV.

Belongs to the NhaA Na(+)/H(+) (TC 2.A.33) antiporter family.

The protein localises to the cell inner membrane. The catalysed reaction is Na(+)(in) + 2 H(+)(out) = Na(+)(out) + 2 H(+)(in). Functionally, na(+)/H(+) antiporter that extrudes sodium in exchange for external protons. This Shigella dysenteriae serotype 1 (strain Sd197) protein is Na(+)/H(+) antiporter NhaA.